The following is an 89-amino-acid chain: MAHKKGVGSSRNGRESHSKRLGVKLFGGQAAIAGNIIVRQRGTQHHPGENVGIGKDHTLFALTDGVVTFRKGRQDRSFVSVLPVAEAKA.

Belongs to the bacterial ribosomal protein bL27 family.

The chain is Large ribosomal subunit protein bL27 from Cytophaga hutchinsonii (strain ATCC 33406 / DSM 1761 / CIP 103989 / NBRC 15051 / NCIMB 9469 / D465).